A 363-amino-acid polypeptide reads, in one-letter code: Chorismate synthase (363 aa).

NADP(+) is bound by residues R48 and R54. Residues 125–127 (RSS), 237–238 (NA), G277, 292–296 (KPTSS), and R318 each bind FMN.

The protein belongs to the chorismate synthase family. In terms of assembly, homotetramer. The cofactor is FMNH2.

It carries out the reaction 5-O-(1-carboxyvinyl)-3-phosphoshikimate = chorismate + phosphate. The protein operates within metabolic intermediate biosynthesis; chorismate biosynthesis; chorismate from D-erythrose 4-phosphate and phosphoenolpyruvate: step 7/7. Its function is as follows. Catalyzes the anti-1,4-elimination of the C-3 phosphate and the C-6 proR hydrogen from 5-enolpyruvylshikimate-3-phosphate (EPSP) to yield chorismate, which is the branch point compound that serves as the starting substrate for the three terminal pathways of aromatic amino acid biosynthesis. This reaction introduces a second double bond into the aromatic ring system. The polypeptide is Chorismate synthase (Pseudomonas savastanoi pv. phaseolicola (strain 1448A / Race 6) (Pseudomonas syringae pv. phaseolicola (strain 1448A / Race 6))).